A 521-amino-acid polypeptide reads, in one-letter code: FAD-dependent monooxygenase mdpD (521 aa).

The segment at 1-48 (MTHFPVNIASDKQEFDPERWAKTPTTESSVNGENGTAPTSGLPSRHPS) is disordered. The span at 11 to 21 (DKQEFDPERWA) shows a compositional bias: basic and acidic residues. Residues 23-48 (TPTTESSVNGENGTAPTSGLPSRHPS) are compositionally biased toward polar residues. 2 residues coordinate FAD: V94 and R160. Catalysis depends on residues R244 and Y271. FAD is bound by residues D369 and G382.

This sequence belongs to the paxM FAD-dependent monooxygenase family. Requires FAD as cofactor.

The protein operates within secondary metabolite biosynthesis. Functionally, FAD-dependent monooxygenase; part of the gene cluster that mediates the biosynthesis of monodictyphenone, a prenyl xanthone derivative. The pathway begins with the synthesis of atrochrysone thioester by the polyketide synthase (PKS) mdpG. The atrochrysone carboxyl ACP thioesterase mdpF then breaks the thioester bond and releases the atrochrysone carboxylic acid from mdpG. The atrochrysone carboxylic acid is then converted to atrochrysone which is further transformed into emodin anthrone. The next step is performed by the anthrone oxygenase mdpH that catalyzes the oxidation of emodinanthrone to emodin. Emodin is further modified to yield monodictyphenone via several steps involving mdpB, mdpC mdpJ, mdpK and mdpL. These enzymes with xptA, xptB and xptC are also proposed to be involved in the synthesis of shamixanthone from emodin. Especially, direct reduction of emodin by the short chain dehydrogenase mdpC followed by dehydration catalyzed by the scytalone dehydratase-like protein mdpB gives loss of oxygen and formation of chrysophanol intermediate in two simple steps. This is FAD-dependent monooxygenase mdpD from Emericella nidulans (strain FGSC A4 / ATCC 38163 / CBS 112.46 / NRRL 194 / M139) (Aspergillus nidulans).